A 316-amino-acid chain; its full sequence is Fe-S cluster assembly protein DRE2 (316 aa).

Residues 7–139 (VSPPKRTLLL…PDYGDNEGAV (133 aa)) form an N-terminal SAM-like domain region. The linker stretch occupies residues 140–208 (TLKFGLKKKN…EDTLMTEEDL (69 aa)). The [2Fe-2S] cluster site is built by cysteine 218, cysteine 229, cysteine 232, and cysteine 234. Residues 218–234 (CQPKAGKRRRACKDCSC) form a fe-S binding site A region. Cysteine 279, cysteine 282, cysteine 290, and cysteine 293 together coordinate [4Fe-4S] cluster. 2 short sequence motifs (cx2C motif) span residues 279 to 282 (CGNC) and 290 to 293 (CDGC). The segment at 279–293 (CGNCSLGDAFRCDGC) is fe-S binding site B.

This sequence belongs to the anamorsin family. As to quaternary structure, monomer. Interacts with TAH18. Interacts with MIA40. It depends on [2Fe-2S] cluster as a cofactor. The cofactor is [4Fe-4S] cluster.

It localises to the cytoplasm. It is found in the mitochondrion intermembrane space. Its function is as follows. Component of the cytosolic iron-sulfur (Fe-S) protein assembly (CIA) machinery required for the maturation of extramitochondrial Fe-S proteins. Part of an electron transfer chain functioning in an early step of cytosolic Fe-S biogenesis, facilitating the de novo assembly of a [4Fe-4S] cluster on the scaffold complex CFD1-NBP35. Electrons are transferred to DRE2 from NADPH via the FAD- and FMN-containing protein TAH18. TAH18-DRE2 are also required for the assembly of the diferric tyrosyl radical cofactor of ribonucleotide reductase (RNR), probably by providing electrons for reduction during radical cofactor maturation in the catalytic small subunit RNR2. The polypeptide is Fe-S cluster assembly protein DRE2 (Fusarium vanettenii (strain ATCC MYA-4622 / CBS 123669 / FGSC 9596 / NRRL 45880 / 77-13-4) (Fusarium solani subsp. pisi)).